The sequence spans 225 residues: Ribonuclease 3 (225 aa).

The 126-residue stretch at 7–132 (MKAFEARLGY…VIAAVYRDGG (126 aa)) folds into the RNase III domain. Glu-45 is a Mg(2+) binding site. Asp-49 is an active-site residue. Residues Asp-118 and Glu-121 each contribute to the Mg(2+) site. The active site involves Glu-121. In terms of domain architecture, DRBM spans 157-225 (DAKTALQEWA…AARKLLDSLD (69 aa)).

This sequence belongs to the ribonuclease III family. In terms of assembly, homodimer. Requires Mg(2+) as cofactor.

It localises to the cytoplasm. The enzyme catalyses Endonucleolytic cleavage to 5'-phosphomonoester.. Its function is as follows. Digests double-stranded RNA. Involved in the processing of primary rRNA transcript to yield the immediate precursors to the large and small rRNAs (23S and 16S). Processes some mRNAs, and tRNAs when they are encoded in the rRNA operon. Processes pre-crRNA and tracrRNA of type II CRISPR loci if present in the organism. The polypeptide is Ribonuclease 3 (Ruegeria pomeroyi (strain ATCC 700808 / DSM 15171 / DSS-3) (Silicibacter pomeroyi)).